The primary structure comprises 205 residues: Small ribosomal subunit protein uS4c (205 aa).

Residues 22 to 42 are disordered; the sequence is TSKISKKTNTPGEHGQPQNKL. The segment covering 28 to 42 has biased composition (polar residues); that stretch reads KTNTPGEHGQPQNKL. Residues 94–157 enclose the S4 RNA-binding domain; sequence MRLDNIVYRL…ASRDLVKKFV (64 aa).

This sequence belongs to the universal ribosomal protein uS4 family. In terms of assembly, part of the 30S ribosomal subunit. Contacts protein S5. The interaction surface between S4 and S5 is involved in control of translational fidelity.

It localises to the plastid. It is found in the chloroplast. One of the primary rRNA binding proteins, it binds directly to 16S rRNA where it nucleates assembly of the body of the 30S subunit. Its function is as follows. With S5 and S12 plays an important role in translational accuracy. This is Small ribosomal subunit protein uS4c (rps4) from Tupiella akineta (Green alga).